The sequence spans 105 residues: Large ribosomal subunit protein mL49 (105 aa).

Residues M1 to N15 constitute a mitochondrion transit peptide.

This sequence belongs to the mitochondrion-specific ribosomal protein mL49 family. In terms of assembly, component of the mitochondrial large ribosomal subunit (mt-LSU). Mature yeast 74S mitochondrial ribosomes consist of a small (37S) and a large (54S) subunit. The 37S small subunit contains a 15S ribosomal RNA (15S mt-rRNA) and at least 32 different proteins. The 54S large subunit contains a 21S rRNA (21S mt-rRNA) and at least 45 different proteins.

It is found in the mitochondrion. Component of the mitochondrial ribosome (mitoribosome), a dedicated translation machinery responsible for the synthesis of mitochondrial genome-encoded proteins, including at least some of the essential transmembrane subunits of the mitochondrial respiratory chain. The mitoribosomes are attached to the mitochondrial inner membrane and translation products are cotranslationally integrated into the membrane. The chain is Large ribosomal subunit protein mL49 (img2) from Schizosaccharomyces pombe (strain 972 / ATCC 24843) (Fission yeast).